The chain runs to 603 residues: Proline--tRNA ligase (603 aa).

This sequence belongs to the class-II aminoacyl-tRNA synthetase family. ProS type 1 subfamily. In terms of assembly, homodimer.

The protein localises to the cytoplasm. It catalyses the reaction tRNA(Pro) + L-proline + ATP = L-prolyl-tRNA(Pro) + AMP + diphosphate. Catalyzes the attachment of proline to tRNA(Pro) in a two-step reaction: proline is first activated by ATP to form Pro-AMP and then transferred to the acceptor end of tRNA(Pro). As ProRS can inadvertently accommodate and process non-cognate amino acids such as alanine and cysteine, to avoid such errors it has two additional distinct editing activities against alanine. One activity is designated as 'pretransfer' editing and involves the tRNA(Pro)-independent hydrolysis of activated Ala-AMP. The other activity is designated 'posttransfer' editing and involves deacylation of mischarged Ala-tRNA(Pro). The misacylated Cys-tRNA(Pro) is not edited by ProRS. The polypeptide is Proline--tRNA ligase (Prochlorococcus marinus (strain SARG / CCMP1375 / SS120)).